The sequence spans 380 residues: Beta sliding clamp (380 aa).

It belongs to the beta sliding clamp family. Forms a ring-shaped head-to-tail homodimer around DNA which binds and tethers DNA polymerases and other proteins to the DNA. The DNA replisome complex has a single clamp-loading complex (3 tau and 1 each of delta, delta', psi and chi subunits) which binds 3 Pol III cores (1 core on the leading strand and 2 on the lagging strand) each with a beta sliding clamp dimer. Additional proteins in the replisome are other copies of gamma, psi and chi, Ssb, DNA helicase and RNA primase.

The protein localises to the cytoplasm. Functionally, confers DNA tethering and processivity to DNA polymerases and other proteins. Acts as a clamp, forming a ring around DNA (a reaction catalyzed by the clamp-loading complex) which diffuses in an ATP-independent manner freely and bidirectionally along dsDNA. Initially characterized for its ability to contact the catalytic subunit of DNA polymerase III (Pol III), a complex, multichain enzyme responsible for most of the replicative synthesis in bacteria; Pol III exhibits 3'-5' exonuclease proofreading activity. The beta chain is required for initiation of replication as well as for processivity of DNA replication. The polypeptide is Beta sliding clamp (dnaN) (Halalkalibacterium halodurans (strain ATCC BAA-125 / DSM 18197 / FERM 7344 / JCM 9153 / C-125) (Bacillus halodurans)).